Consider the following 316-residue polypeptide: Acetylglutamate kinase (316 aa).

Substrate-binding positions include 76–77 (GG), Arg-98, and Asn-207.

The protein belongs to the acetylglutamate kinase family. ArgB subfamily.

It is found in the cytoplasm. The catalysed reaction is N-acetyl-L-glutamate + ATP = N-acetyl-L-glutamyl 5-phosphate + ADP. It functions in the pathway amino-acid biosynthesis; L-arginine biosynthesis; N(2)-acetyl-L-ornithine from L-glutamate: step 2/4. In terms of biological role, catalyzes the ATP-dependent phosphorylation of N-acetyl-L-glutamate. The polypeptide is Acetylglutamate kinase (Paenarthrobacter aurescens (strain TC1)).